Reading from the N-terminus, the 280-residue chain is MELLDIWNWIQQNGILTAVITGIVALLFNQRQKSIERFYSQSGETLEKILEPMYYSLKEIKNEEDENHKMVLIEKFFEEYSGKKGKLSKLRNILLIDQILNTEDCFREYILNKNSENRKKLFYKMRMLDQAVNKEYRSIFVTLNKNYNWYKVLFRTNYILSAVFVFVRWFKETLAFFVGASAFAFIPLLYDKYLGEQVLGNWLEVNKLIFGLSCSALYIFWIIHYFLLKDTMQRKDEISLFQEWFDKTKLGKWTNKNVWGKIGNWNVERRARRVRNDEDV.

Transmembrane regions (helical) follow at residues Ile-10 to Asn-29, Phe-164 to Ile-186, and Ile-209 to Leu-228.

It is found in the cell membrane. This is an uncharacterized protein from Bacillus subtilis (strain 168).